We begin with the raw amino-acid sequence, 66 residues long: Cold shock-like protein CspLA (66 aa).

Residues 4 to 63 enclose the CSD domain; it reads GTVKWFNAEKGFGFIERENGDDVFVHFSAIQGDGFKSLDEGQAVTFDVEEGQRGPQAANV.

As to quaternary structure, homodimer.

The protein resides in the cytoplasm. The chain is Cold shock-like protein CspLA (cspLA) from Listeria innocua serovar 6a (strain ATCC BAA-680 / CLIP 11262).